The sequence spans 219 residues: Small ribosomal subunit protein uS3c (219 aa).

A KH type-2 domain is found at 47–118; that stretch reads IRNHVRNSSN…KLRMTLVEVL (72 aa).

The protein belongs to the universal ribosomal protein uS3 family. In terms of assembly, part of the 30S ribosomal subunit.

It localises to the plastid. The protein resides in the chloroplast. This is Small ribosomal subunit protein uS3c (rps3) from Chara vulgaris (Common stonewort).